A 717-amino-acid polypeptide reads, in one-letter code: PAN2-PAN3 deadenylation complex subunit PAN3 (717 aa).

The C3H1-type zinc finger occupies 8–37; it reads WARDVPCRNVIIYGFCKKKTEGCPFKHDDD. Positions 37–100 are disordered; sequence DDIATPTSTP…HTGSKSQVPK (64 aa). Residues 62–90 are compositionally biased toward low complexity; the sequence is PSKISVSSLPSLNSQPSSTAPTSAPNATA. Residues 91–100 are compositionally biased toward polar residues; the sequence is HTGSKSQVPK. The segment at 323 to 585 is pseudokinase domain; it reads QLFPSGGNLP…ATIIEKYIGL (263 aa). Residues arginine 378, 428 to 435, and 482 to 483 contribute to the ATP site; these read DYYPNATS and DK. The stretch at 586 to 624 forms a coiled coil; sequence DVVFKVMEAQQTYSEYAENVLSRELENGRLFRLICKLNF. The knob domain stretch occupies residues 625–717; the sequence is IFGRVENRLD…VDKTFRAMTL (93 aa).

The protein belongs to the protein kinase superfamily. PAN3 family. As to quaternary structure, homodimer. Forms a heterotrimer with a catalytic subunit PAN2 to form the poly(A)-nuclease (PAN) deadenylation complex. Interacts (via PAM-2 motif) with poly(A)-binding protein PAB1 (via PABC domain), conferring substrate specificity of the enzyme complex.

Its subcellular location is the cytoplasm. Functionally, regulatory subunit of the poly(A)-nuclease (PAN) deadenylation complex, one of two cytoplasmic mRNA deadenylases involved in mRNA turnover. PAN specifically shortens poly(A) tails of RNA and the activity is stimulated by poly(A)-binding protein PAB1. PAN deadenylation is followed by rapid degradation of the shortened mRNA tails by the CCR4-NOT complex. Deadenylated mRNAs are then degraded by two alternative mechanisms, namely exosome-mediated 3'-5' exonucleolytic degradation, or deadenylation-dependent mRNA decaping and subsequent 5'-3' exonucleolytic degradation by XRN1. May also be involved in post-transcriptional maturation of mRNA poly(A) tails. PAN3 acts as a positive regulator for PAN activity, recruiting the catalytic subunit PAN2 to mRNA via its interaction with RNA and with PAB1. This Candida glabrata (strain ATCC 2001 / BCRC 20586 / JCM 3761 / NBRC 0622 / NRRL Y-65 / CBS 138) (Yeast) protein is PAN2-PAN3 deadenylation complex subunit PAN3.